The primary structure comprises 208 residues: Outer-membrane lipoprotein carrier protein (208 aa).

An N-terminal signal peptide occupies residues 1 to 21; that stretch reads MKRTATLLVVALILALNTAQA.

It belongs to the LolA family. In terms of assembly, monomer.

It localises to the periplasm. Participates in the translocation of lipoproteins from the inner membrane to the outer membrane. Only forms a complex with a lipoprotein if the residue after the N-terminal Cys is not an aspartate (The Asp acts as a targeting signal to indicate that the lipoprotein should stay in the inner membrane). In Halorhodospira halophila (strain DSM 244 / SL1) (Ectothiorhodospira halophila (strain DSM 244 / SL1)), this protein is Outer-membrane lipoprotein carrier protein.